We begin with the raw amino-acid sequence, 209 residues long: Vacuolar protein sorting-associated protein 28 homolog 1 (209 aa).

Residues 1-99 (MEVKLWNDKR…TSGVPATVEH (99 aa)) form the VPS28 N-terminal domain. The VPS28 C-terminal domain occupies 109 to 205 (SSASVVAECV…SYNSFMAALP (97 aa)).

This sequence belongs to the VPS28 family. In terms of assembly, component of the endosomal sorting required for transport complex I (ESCRT-I), composed of ELC, VPS28 and VPS37. Interacts with ELC.

It is found in the endosome. Component of the ESCRT-I complex (endosomal sorting complex required for transport I), a regulator of vesicular trafficking process. Required for the sorting of endocytic ubiquitinated cargos into multivesicular bodies (MVBs). Mediates the association to the ESCRT-0 complex. The protein is Vacuolar protein sorting-associated protein 28 homolog 1 (VPS28-1) of Arabidopsis thaliana (Mouse-ear cress).